Here is a 379-residue protein sequence, read N- to C-terminus: Isocitrate dehydrogenase [NAD] subunit 2, mitochondrial (379 aa).

Residues 1–27 (MSMLSTLRTAGSLRTFSRSACYSFQRF) constitute a mitochondrion transit peptide. R129, R139, R160, and D247 together coordinate substrate. The Mg(2+) site is built by D247, D273, and D277.

It belongs to the isocitrate and isopropylmalate dehydrogenases family. Octamer of two non-identical subunits IDH1 and IDH2. Mg(2+) is required as a cofactor. The cofactor is Mn(2+).

The protein resides in the mitochondrion. It catalyses the reaction D-threo-isocitrate + NAD(+) = 2-oxoglutarate + CO2 + NADH. Performs an essential role in the oxidative function of the citric acid cycle and is involved in glutamate biosynthesis. Also binds RNA; specifically to the 5'-untranslated leaders of mitochondrial mRNAs. The chain is Isocitrate dehydrogenase [NAD] subunit 2, mitochondrial (idh2) from Schizosaccharomyces pombe (strain 972 / ATCC 24843) (Fission yeast).